Here is a 315-residue protein sequence, read N- to C-terminus: MDGSSPLLAAAGSDGDRSSSEGEYTLAGGPSAGDTEKREGESPMEAAGAGTVGFSISRLDTLSALRLNRTRPAADTELRYLHLLWKPGELLQAGRSTPGKITSSRVRRLARARRNMGPIGKDLHAVKRLREAANSNDIDTVRRLLEDDTDPCAADDKGRTALHFSSCNGNETIVQLLLSYGADPNQRDSLGNTPLHLAACTNHVPVITTLLRGGARVDALDRAGRTPLHLARSKLNILQEGDSRSLETLRGEVTQIIQMLREYLNIMGQSEEREKLEHISTQLQNTRTREQVDEVTDLLASFTSLSIQMQNMGDR.

The segment at 1–49 (MDGSSPLLAAAGSDGDRSSSEGEYTLAGGPSAGDTEKREGESPMEAAGA) is disordered. 4 ANK repeats span residues 124–153 (HAVKRLREAANSNDIDTVRRLLEDDTDPCA), 157–186 (KGRTALHFSSCNGNETIVQLLLSYGADPNQ), 190–219 (LGNTPLHLAACTNHVPVITTLLRGGARVDA), and 223–255 (AGRTPLHLARSKLNILQEGDSRSLETLRGEVTQ).

The protein resides in the nucleus. It localises to the cytoplasm. The protein localises to the midbody. Plays an important role in regulating intracellular signaling events associated with erythroid terminal differentiation. The sequence is that of Ankyrin repeat domain-containing protein 54 (ankrd54) from Danio rerio (Zebrafish).